A 482-amino-acid chain; its full sequence is Adenylosuccinate lyase (482 aa).

Substrate-binding positions include R14–Y15, R82–D84, and T108–S109. The active-site Proton donor/acceptor is the H156. Q238 is a substrate binding site. S286 functions as the Proton donor/acceptor in the catalytic mechanism. Substrate contacts are provided by R300, R326, S331, and R335.

The protein belongs to the lyase 1 family. Adenylosuccinate lyase subfamily. In terms of assembly, homotetramer. Residues from neighboring subunits contribute catalytic and substrate-binding residues to each active site.

The catalysed reaction is N(6)-(1,2-dicarboxyethyl)-AMP = fumarate + AMP. It carries out the reaction (2S)-2-[5-amino-1-(5-phospho-beta-D-ribosyl)imidazole-4-carboxamido]succinate = 5-amino-1-(5-phospho-beta-D-ribosyl)imidazole-4-carboxamide + fumarate. It participates in purine metabolism; AMP biosynthesis via de novo pathway; AMP from IMP: step 2/2. The protein operates within purine metabolism; IMP biosynthesis via de novo pathway; 5-amino-1-(5-phospho-D-ribosyl)imidazole-4-carboxamide from 5-amino-1-(5-phospho-D-ribosyl)imidazole-4-carboxylate: step 2/2. The polypeptide is Adenylosuccinate lyase (ade8) (Schizosaccharomyces pombe (strain 972 / ATCC 24843) (Fission yeast)).